The chain runs to 389 residues: S-adenosylmethionine synthase 3 (389 aa).

Glu-9 contacts Mg(2+). His-15 lines the ATP pocket. Glu-43 provides a ligand contact to K(+). L-methionine contacts are provided by Glu-56 and Gln-99. ATP-binding positions include 167 to 169 (DGK), 235 to 238 (SGRF), Asp-246, 252 to 253 (RK), Ala-269, Lys-273, and Lys-277. Asp-246 lines the L-methionine pocket. Residue Lys-277 coordinates L-methionine.

This sequence belongs to the AdoMet synthase family. In terms of assembly, homotetramer. Requires Mn(2+) as cofactor. Mg(2+) serves as cofactor. The cofactor is Co(2+). K(+) is required as a cofactor.

The protein resides in the cytoplasm. It catalyses the reaction L-methionine + ATP + H2O = S-adenosyl-L-methionine + phosphate + diphosphate. The protein operates within amino-acid biosynthesis; S-adenosyl-L-methionine biosynthesis; S-adenosyl-L-methionine from L-methionine: step 1/1. Its function is as follows. Catalyzes the formation of S-adenosylmethionine from methionine and ATP. The reaction comprises two steps that are both catalyzed by the same enzyme: formation of S-adenosylmethionine (AdoMet) and triphosphate, and subsequent hydrolysis of the triphosphate. The polypeptide is S-adenosylmethionine synthase 3 (METK3) (Vitis vinifera (Grape)).